We begin with the raw amino-acid sequence, 356 residues long: Alanine racemase (356 aa).

Catalysis depends on Lys-35, which acts as the Proton acceptor; specific for D-alanine. N6-(pyridoxal phosphate)lysine is present on Lys-35. Position 130 (Arg-130) interacts with substrate. Catalysis depends on Tyr-253, which acts as the Proton acceptor; specific for L-alanine. Met-301 is a substrate binding site.

Belongs to the alanine racemase family. Pyridoxal 5'-phosphate serves as cofactor.

The catalysed reaction is L-alanine = D-alanine. It participates in amino-acid biosynthesis; D-alanine biosynthesis; D-alanine from L-alanine: step 1/1. Catalyzes the interconversion of L-alanine and D-alanine. May also act on other amino acids. The chain is Alanine racemase (alr) from Sodalis glossinidius (strain morsitans).